The primary structure comprises 771 residues: MSVHATDAKPPGPSPADQLLDGLNPQQRQAVVHEGSPLLIVAGAGSGKTAVLTRRIAYLMAARGVGVGQILAITFTNKAAAEMRERVVGLVGEKARYMWVSTFHSTCVRILRNQAALIEGLNSNFSIYDADDSRRLLQMVGRDLGLDIKRYSPRLLANAISNLKNELIDPHQALAGLTEDSDDLARAVASVYDEYQRRLRAANALDFDDLIGETVAVLQAFPQIAQYYRRRFRHVLVDEYQDTNHAQYVLVRELVGRDSNDGIPPGELCVVGDADQSIYAFRGATIRNIEDFERDYPDTRTILLEQNYRSTQNILSAANSVIARNAGRREKRLWTDAGAGELIVGYVADNEHDEARFVAEEIDALAEGSEITYNDVAVFYRTNNSSRSLEEVLIRAGIPYKVVGGVRFYERKEIRDIVAYLRVLDNPGDAVSLRRILNTPRRGIGDRAEACVAVYAENTGVGFGDALVAAAQGKVPMLNTRAEKAIAGFVEMFDELRGRLDDDLGELVEAVLERTGYRRELEASTDPQELARLDNLNELVSVAHEFSTDRENAAALGPDDEDVPDTGVLADFLERVSLVADADEIPEHGAGVVTLMTLHTAKGLEFPVVFVTGWEDGMFPHMRALDNPTELSEERRLAYVGITRARQRLYVSRAIVRSSWGQPMLNPESRFLREIPQELIDWRRTAPKPSFSAPVSGAGRFGSARPSPTRSGASRRPLLVLQVGDRVTHDKYGLGRVEEVSGVGESAMSLIDFGSSGRVKLMHNHAPVTKL.

The disordered stretch occupies residues 1–21 (MSVHATDAKPPGPSPADQLLD). The UvrD-like helicase ATP-binding domain maps to 21-311 (DGLNPQQRQA…ILLEQNYRST (291 aa)). Residues 45-50 (GSGKTA) and Arg-309 contribute to the ATP site. Positions 312–603 (QNILSAANSV…TLMTLHTAKG (292 aa)) constitute a UvrD-like helicase C-terminal domain. A disordered region spans residues 691–716 (FSAPVSGAGRFGSARPSPTRSGASRR).

It belongs to the helicase family. UvrD subfamily. As to quaternary structure, monomer. Requires Mg(2+) as cofactor.

It catalyses the reaction Couples ATP hydrolysis with the unwinding of duplex DNA by translocating in the 3'-5' direction.. It carries out the reaction ATP + H2O = ADP + phosphate + H(+). Functionally, DNA-dependent ATPase, acting on dsDNA with a 3'-ssDNA tail, unwinding with 3'-to 5'-polarity. Also highly efficient on nicked DNA. Involved in the post-incision events of nucleotide excision repair. The sequence is that of ATP-dependent DNA helicase UvrD1 (uvrD1) from Mycobacterium bovis (strain ATCC BAA-935 / AF2122/97).